The following is a 291-amino-acid chain: Pyridoxal 5'-phosphate synthase subunit PdxS (291 aa).

Position 23 (Asp23) interacts with D-ribose 5-phosphate. The active-site Schiff-base intermediate with D-ribose 5-phosphate is the Lys80. Gly152 is a binding site for D-ribose 5-phosphate. Residue Arg164 participates in D-glyceraldehyde 3-phosphate binding. D-ribose 5-phosphate contacts are provided by residues Gly213 and 234–235 (GS).

The protein belongs to the PdxS/SNZ family. In the presence of PdxT, forms a dodecamer of heterodimers.

The enzyme catalyses aldehydo-D-ribose 5-phosphate + D-glyceraldehyde 3-phosphate + L-glutamine = pyridoxal 5'-phosphate + L-glutamate + phosphate + 3 H2O + H(+). The protein operates within cofactor biosynthesis; pyridoxal 5'-phosphate biosynthesis. Its function is as follows. Catalyzes the formation of pyridoxal 5'-phosphate from ribose 5-phosphate (RBP), glyceraldehyde 3-phosphate (G3P) and ammonia. The ammonia is provided by the PdxT subunit. Can also use ribulose 5-phosphate and dihydroxyacetone phosphate as substrates, resulting from enzyme-catalyzed isomerization of RBP and G3P, respectively. This chain is Pyridoxal 5'-phosphate synthase subunit PdxS, found in Bifidobacterium longum (strain NCC 2705).